A 263-amino-acid chain; its full sequence is 3'-5' ssDNA/RNA exonuclease TatD (263 aa).

A divalent metal cation-binding residues include glutamate 92, histidine 128, and histidine 153.

The protein belongs to the metallo-dependent hydrolases superfamily. TatD-type hydrolase family. TatD subfamily. Monomer. It depends on Mg(2+) as a cofactor.

Its subcellular location is the cytoplasm. In terms of biological role, 3'-5' exonuclease that prefers single-stranded DNA and RNA. May play a role in the H(2)O(2)-induced DNA damage repair. This Rahnella sp. (strain Y9602) protein is 3'-5' ssDNA/RNA exonuclease TatD.